Here is a 1375-residue protein sequence, read N- to C-terminus: DNA-directed RNA polymerase subunit beta (1375 aa).

The protein belongs to the RNA polymerase beta chain family. As to quaternary structure, the RNAP catalytic core consists of 2 alpha, 1 beta, 1 beta' and 1 omega subunit. When a sigma factor is associated with the core the holoenzyme is formed, which can initiate transcription.

The catalysed reaction is RNA(n) + a ribonucleoside 5'-triphosphate = RNA(n+1) + diphosphate. DNA-dependent RNA polymerase catalyzes the transcription of DNA into RNA using the four ribonucleoside triphosphates as substrates. The polypeptide is DNA-directed RNA polymerase subunit beta (Coxiella burnetii (strain Dugway 5J108-111)).